The sequence spans 381 residues: 5-amino-6-(D-ribitylamino)uracil--L-tyrosine 4-hydroxyphenyl transferase (381 aa).

The Radical SAM core domain occupies 59 to 306 (VTYVVNRNIN…TAVARIFLGN (248 aa)). The [4Fe-4S] cluster site is built by C73, C77, and C80.

This sequence belongs to the radical SAM superfamily. CofH family. As to quaternary structure, consists of two subunits, CofG and CofH. [4Fe-4S] cluster is required as a cofactor.

It carries out the reaction 5-amino-6-(D-ribitylamino)uracil + L-tyrosine + S-adenosyl-L-methionine = 5-amino-5-(4-hydroxybenzyl)-6-(D-ribitylimino)-5,6-dihydrouracil + 2-iminoacetate + 5'-deoxyadenosine + L-methionine + H(+). The protein operates within cofactor biosynthesis; coenzyme F0 biosynthesis. Functionally, catalyzes the radical-mediated synthesis of 5-amino-5-(4-hydroxybenzyl)-6-(D-ribitylimino)-5,6-dihydrouracil from 5-amino-6-(D-ribitylamino)uracil and L-tyrosine. The chain is 5-amino-6-(D-ribitylamino)uracil--L-tyrosine 4-hydroxyphenyl transferase from Cyanothece sp. (strain PCC 7425 / ATCC 29141).